The chain runs to 416 residues: Glutamyl-tRNA reductase (416 aa).

Residues 49-52 (TCNR), S105, 110-112 (EPQ), and Q116 each bind substrate. The active-site Nucleophile is the C50. 185 to 190 (GAGETI) serves as a coordination point for NADP(+).

The protein belongs to the glutamyl-tRNA reductase family. In terms of assembly, homodimer.

The catalysed reaction is (S)-4-amino-5-oxopentanoate + tRNA(Glu) + NADP(+) = L-glutamyl-tRNA(Glu) + NADPH + H(+). Its pathway is porphyrin-containing compound metabolism; protoporphyrin-IX biosynthesis; 5-aminolevulinate from L-glutamyl-tRNA(Glu): step 1/2. In terms of biological role, catalyzes the NADPH-dependent reduction of glutamyl-tRNA(Glu) to glutamate 1-semialdehyde (GSA). The chain is Glutamyl-tRNA reductase from Shewanella sp. (strain MR-7).